We begin with the raw amino-acid sequence, 153 residues long: Protein SprT-like (153 aa).

The SprT-like domain occupies 7–145; it reads QTLVEKISIV…VCGKCHGRLS (139 aa). A Zn(2+)-binding site is contributed by H67. Residue E68 is part of the active site. H71 is a Zn(2+) binding site.

Belongs to the SprT family. Zn(2+) is required as a cofactor.

The protein resides in the cytoplasm. The chain is Protein SprT-like from Enterococcus faecalis (strain ATCC 700802 / V583).